We begin with the raw amino-acid sequence, 387 residues long: Putative F-box protein At1g47800 (387 aa).

In terms of domain architecture, F-box spans 8–54; sequence LQSLDHIPIDVLFEILVKLPAKSVARFLCVSKVWATMIRGEVFIRSF.

This chain is Putative F-box protein At1g47800, found in Arabidopsis thaliana (Mouse-ear cress).